A 368-amino-acid polypeptide reads, in one-letter code: Germination protease (368 aa).

Positions 1 to 16 (MKKSELDVNQYLIRTD) are excised as a propeptide.

It belongs to the peptidase A25 family. As to quaternary structure, homotetramer. Post-translationally, autoproteolytically processed. The inactive tetrameric zymogen termed p46 autoprocesses to a smaller form termed p41, which is active only during spore germination.

It carries out the reaction Endopeptidase action with P4 Glu or Asp, P1 preferably Glu &gt; Asp, P1' hydrophobic and P2' Ala.. Initiates the degradation of small, acid-soluble proteins during spore germination. The polypeptide is Germination protease (gpr) (Bacillus subtilis (strain 168)).